A 253-amino-acid chain; its full sequence is 23S rRNA (cytidine-2'-O)-methyltransferase TlyA (253 aa).

Residues 1-73 form the S4 RNA-binding domain; that stretch reads MRFDFFVSKR…LKLDLLSEIY (73 aa).

It belongs to the TlyA family.

It carries out the reaction cytidine(1920) in 23S rRNA + S-adenosyl-L-methionine = 2'-O-methylcytidine(1920) in 23S rRNA + S-adenosyl-L-homocysteine + H(+). In terms of biological role, catalyzes the 2'-O-methylation at nucleotide C1920 in 23S rRNA. Enhances motility. Enhances biofilm formation. Involved in the assembly of 70S ribosomes. Involved in virulence by promoting adherence and invasion to host cells. Involved in pathogenicity by modulating secretion of host-protective chemokine interleukin 8 (IL-8). Involved in susceptibility to antibiotic capreomycin. This Campylobacter jejuni subsp. jejuni serotype O:23/36 (strain 81-176) protein is 23S rRNA (cytidine-2'-O)-methyltransferase TlyA.